Consider the following 385-residue polypeptide: SH3 domain-binding protein 5-like (385 aa).

The interval M1 to P58 is disordered. The residue at position 13 (T13) is a Phosphothreonine. The segment covering L18–P28 has biased composition (basic and acidic residues). Residues S30 and S49 each carry the phosphoserine modification. Coiled-coil stretches lie at residues R59–A140 and W169–H272. A disordered region spans residues H272 to P328. The span at E318–P328 shows a compositional bias: low complexity. Phosphoserine is present on residues S343, S350, S358, and S362. The interval D359 to L385 is disordered. Basic residues predominate over residues G376–L385.

The protein belongs to the SH3BP5 family.

Functionally, functions as a guanine nucleotide exchange factor (GEF) for RAB11A. This chain is SH3 domain-binding protein 5-like (SH3BP5L), found in Bos taurus (Bovine).